The sequence spans 215 residues: Ribonuclease T (215 aa).

The Exonuclease domain occupies 20–194 (VVIDVETAGF…YDTERTAVLF (175 aa)). Aspartate 23, glutamate 25, histidine 181, and aspartate 186 together coordinate Mg(2+). The Proton donor/acceptor role is filled by histidine 181.

The protein belongs to the RNase T family. Homodimer. Requires Mg(2+) as cofactor.

Trims short 3' overhangs of a variety of RNA species, leaving a one or two nucleotide 3' overhang. Responsible for the end-turnover of tRNA: specifically removes the terminal AMP residue from uncharged tRNA (tRNA-C-C-A). Also appears to be involved in tRNA biosynthesis. The chain is Ribonuclease T from Shigella boydii serotype 4 (strain Sb227).